We begin with the raw amino-acid sequence, 358 residues long: Adenosine deaminase (358 aa).

Zn(2+) contacts are provided by histidine 14 and histidine 16. Positions 16, 18, and 183 each coordinate substrate. Histidine 212 is a binding site for Zn(2+). Glutamate 215 functions as the Proton donor in the catalytic mechanism. Aspartate 294 is a binding site for Zn(2+). Substrate is bound at residue aspartate 295.

It belongs to the metallo-dependent hydrolases superfamily. Adenosine and AMP deaminases family. Zn(2+) is required as a cofactor.

It localises to the cell membrane. Its subcellular location is the cell junction. It is found in the cytoplasmic vesicle lumen. The protein resides in the cytoplasm. The protein localises to the lysosome. It catalyses the reaction adenosine + H2O + H(+) = inosine + NH4(+). It carries out the reaction 2'-deoxyadenosine + H2O + H(+) = 2'-deoxyinosine + NH4(+). Its function is as follows. Catalyzes the hydrolytic deamination of adenosine and 2-deoxyadenosine. Plays an important role in purine metabolism and in adenosine homeostasis. Modulates signaling by extracellular adenosine, and so contributes indirectly to cellular signaling events. May act as a positive regulator of T-cell coactivation. In Xenopus tropicalis (Western clawed frog), this protein is Adenosine deaminase (ada).